Reading from the N-terminus, the 863-residue chain is Linoleate 9S-lipoxygenase 1 (863 aa).

A PLAT domain is found at 32–158 (RDFTASLLDN…KYHYNRIFFA (127 aa)). In terms of domain architecture, Lipoxygenase spans 161–863 (SYLPSQMPEA…ARGIPNSISI (703 aa)). A disordered region spans residues 204 to 244 (NDLGEPDRDNPRPVLGGSQKHPYPRRGRTGRIPTKKDPNSE). Fe cation contacts are provided by histidine 518, histidine 523, histidine 709, asparagine 713, and isoleucine 863.

The protein belongs to the lipoxygenase family. As to quaternary structure, monomer. The cofactor is Fe cation.

The protein localises to the cytoplasm. The enzyme catalyses (9Z,12Z)-octadecadienoate + O2 = (9S)-hydroperoxy-(10E,12Z)-octadecadienoate. It functions in the pathway lipid metabolism; oxylipin biosynthesis. Functionally, plant lipoxygenase may be involved in a number of diverse aspects of plant physiology including growth and development, pest resistance, and senescence or responses to wounding. This lipoxygenase introduces molecular oxygen exclusively into the C-9 position of linoleic and linolenic. The polypeptide is Linoleate 9S-lipoxygenase 1 (Oryza sativa subsp. japonica (Rice)).